Reading from the N-terminus, the 881-residue chain is Actin-like protein ARP8 (881 aa).

The segment at 1–150 (MSQEEAESSI…DPAKAPPGKK (150 aa)) is disordered. Acidic residues-rich tracts occupy residues 14 to 33 (EPIDIPLEDDDDEDELEEEN) and 44 to 54 (ENAENESDDSV). A phosphoserine mark is found at Ser-65 and Ser-70. Residues 77–114 (ADEEDEDEEGEDEDEDEDDNDVDNEDENDNDNANENEN) show a composition bias toward acidic residues. Residue 502–505 (NIGA) coordinates ATP.

This sequence belongs to the actin family. In terms of assembly, component of the chromatin-remodeling INO80 complex, at least composed of ARP4, ARP5, ARP8, RVB1, RVB2, TAF14, NHP10, IES1, IES3, IES4, IES6, ACT1, IES2, IES5 and INO80. Exists as monomers and dimers, but the dimer is most probably the biologically relevant form required for stable interactions with histones that exploits the twofold symmetry of the nucleosome core.

It localises to the nucleus. The protein resides in the cytoplasm. It is found in the cytoskeleton. Functionally, probably involved in transcription regulation via its interaction with the INO80 complex, a chromatin remodeling complex. Exhibits low basal ATPase activity, and unable to polymerize. Strongly prefer nucleosomes and H3-H4 tetramers over H2A-H2B dimers, suggesting it may act as a nucleosome recognition module within the complex. This is Actin-like protein ARP8 (ARP8) from Saccharomyces cerevisiae (strain ATCC 204508 / S288c) (Baker's yeast).